An 853-amino-acid chain; its full sequence is Protein translocase subunit SecA 1 (853 aa).

Residues Q85, 103–107 (GEGKT), and D492 each bind ATP.

Belongs to the SecA family. Monomer and homodimer. Part of the essential Sec protein translocation apparatus which comprises SecA, SecYEG and auxiliary proteins SecDF. Other proteins may also be involved.

The protein resides in the cell membrane. Its subcellular location is the cytoplasm. It carries out the reaction ATP + H2O + cellular proteinSide 1 = ADP + phosphate + cellular proteinSide 2.. Part of the Sec protein translocase complex. Interacts with the SecYEG preprotein conducting channel. Has a central role in coupling the hydrolysis of ATP to the transfer of proteins into and across the cell membrane, serving as an ATP-driven molecular motor driving the stepwise translocation of polypeptide chains across the membrane. In Corynebacterium diphtheriae (strain ATCC 700971 / NCTC 13129 / Biotype gravis), this protein is Protein translocase subunit SecA 1.